Here is a 170-residue protein sequence, read N- to C-terminus: Putative zinc finger protein 542 (170 aa).

Residues 1 to 42 (MLENYQNLVWLGLSISKSVISLLEKRKLPWIMAKEEIRGPLP) enclose the KRAB domain. C2H2-type zinc fingers lie at residues 98 to 120 (NVCKECGNLYCHNMQLTLHKRNH) and 126 to 148 (NQCLDCGKYFTRQSTLIQHQRIH). The C2H2-type 3; degenerate zinc-finger motif lies at 154-170 (YKCNECIKTFNQRAHLT).

This sequence belongs to the krueppel C2H2-type zinc-finger protein family.

The protein localises to the nucleus. Its function is as follows. May be involved in transcriptional regulation. The polypeptide is Putative zinc finger protein 542 (ZNF542P) (Homo sapiens (Human)).